The sequence spans 223 residues: Probable cytokinin riboside 5'-monophosphate phosphoribohydrolase LOGL1 (223 aa).

Substrate-binding positions include Glu89, 107–108, 124–130, and Thr136; these read RK and GYGTMEE. Residues 201–223 are disordered; that stretch reads QEVAPRTSWEMSELGYGKTPEES.

It belongs to the LOG family. As to expression, expressed in shoot apex, immature inflorescences and flowers.

The catalysed reaction is N(6)-(dimethylallyl)adenosine 5'-phosphate + H2O = N(6)-dimethylallyladenine + D-ribose 5-phosphate. It catalyses the reaction 9-ribosyl-trans-zeatin 5'-phosphate + H2O = trans-zeatin + D-ribose 5-phosphate. Cytokinin-activating enzyme working in the direct activation pathway. Phosphoribohydrolase that converts inactive cytokinin nucleotides to the biologically active free-base forms. The protein is Probable cytokinin riboside 5'-monophosphate phosphoribohydrolase LOGL1 (LOGL1) of Oryza sativa subsp. japonica (Rice).